We begin with the raw amino-acid sequence, 284 residues long: MEMO1 family protein MmarC6_1286 (284 aa).

Belongs to the MEMO1 family.

This Methanococcus maripaludis (strain C6 / ATCC BAA-1332) protein is MEMO1 family protein MmarC6_1286.